A 92-amino-acid polypeptide reads, in one-letter code: Acylphosphatase (92 aa).

A disulfide bond links Cys5 and Cys49. In terms of domain architecture, Acylphosphatase-like spans 5–92 (CIIAWVYGRV…SGELTDFRIR (88 aa)). Active-site residues include Arg20 and Asn38.

It belongs to the acylphosphatase family.

The enzyme catalyses an acyl phosphate + H2O = a carboxylate + phosphate + H(+). This Escherichia coli O157:H7 protein is Acylphosphatase.